Consider the following 457-residue polypeptide: MSAENESPGLPNGGACCASATGHFLLVGNKVTVVLGAQWGDEGKGKVVDLLAQDADIVCRCQGGNNAGHTVVVDSVEYDFHLLPSGIINQNAIAFIGNGVVIHLPGLFEEAEKNLKKGQGLAGWEKRLCISDRAHIVFDFHQAADGIQEQQRQEQAGKNLGTTKKGIGPVYSSKAARSGLRMCDLVSDFNEFSQRFKLLAKQYKSMYPSLEIDIDGELKKLQDYADRVKPMVKDGVYYIYEALHGPPKKILVEGANAALLDIDFGTYPFVTSSNCTVGGVCTGLGIPPQSIGDVYGVVKAYTTRVGIGAFPTEQNNDIGEMLQTRGHEYGVTTGRKRRCGWLDLVLLRYAHMINGFTALALTKLDILDVFSEIKVGVSYKIDGKNIPHFPANQEVLNKVEVEYETLPGWNKDTSNVRTFEELPENAKKYVQFIKEELGIPIKWIGVGKSRESMIQLF.

GTP contacts are provided by residues 40 to 46 (GDEGKGK) and 68 to 70 (GHT). Catalysis depends on aspartate 41, which acts as the Proton acceptor. Residues aspartate 41 and glycine 68 each contribute to the Mg(2+) site. Residue aspartate 41 participates in substrate binding. Residues 41-44 (DEGK), 66-69 (NAGH), threonine 163, arginine 177, asparagine 256, threonine 271, and arginine 335 each bind IMP. The active-site Proton donor is histidine 69. 331–337 (VTTGRKR) is a binding site for substrate. Residues arginine 337, 363–365 (KLD), and 445–448 (GVGK) each bind GTP.

The protein belongs to the adenylosuccinate synthetase family. In terms of assembly, homodimer. Mg(2+) serves as cofactor.

The protein localises to the cytoplasm. Its subcellular location is the mitochondrion. It carries out the reaction IMP + L-aspartate + GTP = N(6)-(1,2-dicarboxyethyl)-AMP + GDP + phosphate + 2 H(+). It participates in purine metabolism; AMP biosynthesis via de novo pathway; AMP from IMP: step 1/2. Inhibited competitively by AMP and IMP and non-competitively by fructose 1,6-bisphosphate. Its function is as follows. Plays an important role in the de novo pathway and in the salvage pathway of purine nucleotide biosynthesis. Catalyzes the first committed step in the biosynthesis of AMP from IMP. In Xenopus laevis (African clawed frog), this protein is Adenylosuccinate synthetase isozyme 2 (adss2).